Consider the following 365-residue polypeptide: Pyruvate dehydrogenase E1 component subunit beta, mitochondrial (365 aa).

Residues 1–24 constitute a mitochondrion transit peptide; sequence MLRTRLIQAASSAQRAFSTSQKAL. Glu-85 contacts thiamine diphosphate. K(+) is bound by residues Ile-138, Ala-186, Ile-187, and Asp-189.

The cofactor is thiamine diphosphate. Expressed in salivary glands (at protein level).

It localises to the mitochondrion matrix. The enzyme catalyses N(6)-[(R)-lipoyl]-L-lysyl-[protein] + pyruvate + H(+) = N(6)-[(R)-S(8)-acetyldihydrolipoyl]-L-lysyl-[protein] + CO2. The pyruvate dehydrogenase complex catalyzes the overall conversion of pyruvate to acetyl-CoA and CO(2). Might play a role in regulating synapse structure formation at neuromuscular junctions. Might play a role in maintenance of mitochondrial morphology. The polypeptide is Pyruvate dehydrogenase E1 component subunit beta, mitochondrial (Drosophila melanogaster (Fruit fly)).